A 514-amino-acid polypeptide reads, in one-letter code: uncharacterized protein (514 aa).

A compositionally biased stretch (low complexity) spans Met-1–Pro-15. The tract at residues Met-1 to Ser-22 is disordered.

This is an uncharacterized protein from Ictaluridae (bullhead catfishes).